A 64-amino-acid chain; its full sequence is Conotoxin Pu3.4 (64 aa).

An N-terminal signal peptide occupies residues Leu-1–Ala-16. Positions Leu-17–Arg-49 are excised as a propeptide. 3 disulfide bridges follow: Cys-50/Cys-63, Cys-51/Cys-59, and Cys-55/Cys-62. The residue at position 61 (Pro-61) is a 4-hydroxyproline.

It belongs to the conotoxin M superfamily. In terms of tissue distribution, expressed by the venom duct.

Its subcellular location is the secreted. The sequence is that of Conotoxin Pu3.4 from Conus pulicarius (Flea-bitten cone).